The primary structure comprises 404 residues: Cysteine desulfurase IscS (404 aa).

Pyridoxal 5'-phosphate-binding positions include 85–86 (GT), asparagine 165, glutamine 193, 213–215 (SGH), and threonine 251. Cysteine 338 (cysteine persulfide intermediate) is an active-site residue. Cysteine 338 provides a ligand contact to [2Fe-2S] cluster.

Belongs to the class-V pyridoxal-phosphate-dependent aminotransferase family. NifS/IscS subfamily. As to quaternary structure, homodimer. Forms a heterotetramer with IscU, interacts with other sulfur acceptors. The cofactor is pyridoxal 5'-phosphate.

The protein resides in the cytoplasm. It carries out the reaction (sulfur carrier)-H + L-cysteine = (sulfur carrier)-SH + L-alanine. It participates in cofactor biosynthesis; iron-sulfur cluster biosynthesis. Master enzyme that delivers sulfur to a number of partners involved in Fe-S cluster assembly, tRNA modification or cofactor biosynthesis. Catalyzes the removal of elemental sulfur atoms from cysteine to produce alanine. Functions as a sulfur delivery protein for Fe-S cluster synthesis onto IscU, an Fe-S scaffold assembly protein, as well as other S acceptor proteins. This chain is Cysteine desulfurase IscS, found in Methanosarcina thermophila.